The sequence spans 199 residues: uncharacterized protein (199 aa).

The chain crosses the membrane as a helical span at residues 21 to 38 (ISPSATNFIVSLVIMILI).

The protein localises to the membrane. This is an uncharacterized protein from Saccharomyces cerevisiae (strain ATCC 204508 / S288c) (Baker's yeast).